The primary structure comprises 358 residues: Fructose-bisphosphate aldolase 7, cytosolic (358 aa).

Ser2 bears the N-acetylserine mark. Arg52 serves as a coordination point for substrate. Cys68 carries the S-glutathionyl cysteine; transient modification. Substrate is bound at residue Lys142. Cys173 is modified (S-glutathionyl cysteine; transient; alternate). Cys173 carries the post-translational modification S-nitrosocysteine; transient; alternate. Catalysis depends on Glu183, which acts as the Proton acceptor. Lys225 functions as the Schiff-base intermediate with dihydroxyacetone-P in the catalytic mechanism. Substrate is bound at residue 266–268 (SGI).

This sequence belongs to the class I fructose-bisphosphate aldolase family. Homotetramer. Post-translationally, S-glutathionylated at Cys-68 and Cys-173. S-nitrosylated at Cys-173. Highly expressed in flowers, and at lower levels in rosettes leaves and cauline leaves.

It is found in the cytoplasm. Its subcellular location is the cytosol. It carries out the reaction beta-D-fructose 1,6-bisphosphate = D-glyceraldehyde 3-phosphate + dihydroxyacetone phosphate. Its pathway is carbohydrate degradation; glycolysis; D-glyceraldehyde 3-phosphate and glycerone phosphate from D-glucose: step 4/4. Plays a key role in glycolysis and gluconeogenesis. This Arabidopsis thaliana (Mouse-ear cress) protein is Fructose-bisphosphate aldolase 7, cytosolic.